The primary structure comprises 291 residues: 33 kDa chaperonin (291 aa).

2 disulfide bridges follow: cysteine 237–cysteine 239 and cysteine 270–cysteine 273.

The protein belongs to the HSP33 family. Post-translationally, under oxidizing conditions two disulfide bonds are formed involving the reactive cysteines. Under reducing conditions zinc is bound to the reactive cysteines and the protein is inactive.

The protein localises to the cytoplasm. Its function is as follows. Redox regulated molecular chaperone. Protects both thermally unfolding and oxidatively damaged proteins from irreversible aggregation. Plays an important role in the bacterial defense system toward oxidative stress. This chain is 33 kDa chaperonin, found in Bacillus mycoides (strain KBAB4) (Bacillus weihenstephanensis).